The chain runs to 73 residues: Toxin Td7 (73 aa).

The N-terminal stretch at 1-7 (IGMAVEC) is a signal peptide. The 63-residue stretch at 8-70 (KDGYLVGADG…VWDSATNRCG (63 aa)) folds into the LCN-type CS-alpha/beta domain. Disulfide bonds link Cys18/Cys69, Cys22/Cys44, Cys30/Cys50, and Cys34/Cys52. The residue at position 71 (Lys71) is a Lysine amide.

Belongs to the long (4 C-C) scorpion toxin superfamily. Sodium channel inhibitor family. Beta subfamily. Expressed by the venom gland.

It localises to the secreted. Its function is as follows. Beta toxins bind voltage-independently at site-4 of sodium channels (Nav) and shift the voltage of activation toward more negative potentials thereby affecting sodium channel activation and promoting spontaneous and repetitive firing. The polypeptide is Toxin Td7 (Tityus discrepans (Venezuelan scorpion)).